The primary structure comprises 397 residues: UPF0597 protein Tmel_1007 (397 aa).

The protein belongs to the UPF0597 family.

The protein is UPF0597 protein Tmel_1007 of Thermosipho melanesiensis (strain DSM 12029 / CIP 104789 / BI429).